Consider the following 239-residue polypeptide: tRNA (guanine-N(7)-)-methyltransferase (239 aa).

The S-adenosyl-L-methionine site is built by glutamate 69, glutamate 94, aspartate 121, and aspartate 144. Aspartate 144 is an active-site residue. Lysine 148 is a substrate binding site. The segment at 150-155 (RHNKRR) is interaction with RNA. Residues aspartate 180 and 217–220 (TKFE) each bind substrate.

It belongs to the class I-like SAM-binding methyltransferase superfamily. TrmB family. In terms of assembly, monomer.

It carries out the reaction guanosine(46) in tRNA + S-adenosyl-L-methionine = N(7)-methylguanosine(46) in tRNA + S-adenosyl-L-homocysteine. Its pathway is tRNA modification; N(7)-methylguanine-tRNA biosynthesis. Its function is as follows. Catalyzes the formation of N(7)-methylguanine at position 46 (m7G46) in tRNA. This chain is tRNA (guanine-N(7)-)-methyltransferase, found in Klebsiella pneumoniae subsp. pneumoniae (strain ATCC 700721 / MGH 78578).